We begin with the raw amino-acid sequence, 368 residues long: Terpene cyclase penA (368 aa).

The next 6 helical transmembrane spans lie at 10–30 (IILA…NGFI), 81–101 (LSLY…ILLM), 118–138 (LTGL…LLAM), 192–212 (LFIA…GIAH), 233–253 (FALA…FLSI), and 334–354 (LATM…YWTA).

It belongs to the membrane-bound ascI terpene cyclase family.

It localises to the membrane. It participates in secondary metabolite biosynthesis. Part of the gene cluster that mediates the biosynthesis of the indole diterpenes penitrems. The geranylgeranyl diphosphate (GGPP) synthase penG catalyzes the first step in penitrem biosynthesis via conversion of farnesyl pyrophosphate and isopentyl pyrophosphate into geranylgeranyl pyrophosphate (GGPP). Condensation of indole-3-glycerol phosphate with GGPP by the prenyl transferase penC then forms 3-geranylgeranylindole (3-GGI). Epoxidation by the FAD-dependent monooxygenase penM leads to a epoxidized-GGI that is substrate of the terpene cyclase penB for cyclization to yield paspaline. Paspaline is subsequently converted to 13-desoxypaxilline by the cytochrome P450 monooxygenase penP, the latter being then converted to paxilline by the cytochrome P450 monooxygenase penQ. Paxilline is converted to beta-paxitriol via C-10 ketoreduction by the short-chain dehydrogenase PC-15 which can be monoprenylated at the C-20 by the indole diterpene prenyltransferase penD. A two-step elimination (acetylation and elimination) process performed by the O-acetyltransferase PC-16 and the P.simplicissimum ptmI-ortholog not yet identified in P.crustosum, leads to the production of the prenylated form of penijanthine. The FAD-linked oxidoreductase ptmO then converts the prenylated form of penijanthine into PC-M5 which is in turn transformed into PC-M4 by the aromatic dimethylallyltransferase PC-22. A series of oxidation steps involving 4 cytochrome P450 monooxygenases (PC-21, PC-05, PC-23, PC-20) and a FAD-dependent monooxygenase (PC-14) are required for the transformation of PC-M4 to penitrems A and E. Synthesis of these final products is proposed to proceed via penitrems D and C (PC-21, PC-05, PC-14) and penitrems B and F (PC-21, PC-05, PC-14, PC-23). The chain is Terpene cyclase penA from Penicillium crustosum (Blue mold fungus).